A 926-amino-acid chain; its full sequence is Lipoxygenase 4, chloroplastic (926 aa).

Residues 1–58 constitute a chloroplast transit peptide; the sequence is MALANEIMGSRLIFERSSSLASPFHSRFSIKKKTQRTQFSINPFDPRPMRAVNSSGVV. In terms of domain architecture, PLAT spans 106-228; the sequence is FKETLVKHLD…DHPSKRILFT (123 aa). The Lipoxygenase domain maps to 231 to 926; that stretch reads PYLPSETPSG…CRGVPNSVSI (696 aa). His585, His590, His777, Asn781, and Ile926 together coordinate Fe cation.

This sequence belongs to the lipoxygenase family. Fe cation is required as a cofactor. In terms of tissue distribution, expressed in leaves.

Its subcellular location is the plastid. The protein localises to the chloroplast. The catalysed reaction is (9Z,12Z)-octadecadienoate + O2 = (13S)-hydroperoxy-(9Z,11E)-octadecadienoate. It catalyses the reaction (9Z,12Z,15Z)-octadecatrienoate + O2 = (13S)-hydroperoxy-(9Z,11E,15Z)-octadecatrienoate. The protein operates within lipid metabolism; oxylipin biosynthesis. Its function is as follows. Plant lipoxygenases may be involved in a number of diverse aspects of plant physiology including growth and development, pest resistance, and senescence or responses to wounding. Catalyzes the hydroperoxidation of lipids containing a cis,cis-1,4-pentadiene structure. 13S-lipoxygenase that can use linolenic acid as substrates. The polypeptide is Lipoxygenase 4, chloroplastic (LOX4) (Arabidopsis thaliana (Mouse-ear cress)).